A 92-amino-acid polypeptide reads, in one-letter code: MTRSLKKGPFVANHLLRKIENLNLRKEKKIIVTRSRASTIVPTMIGHTIAVYNGQEHLPIYITDRMIGHKLGEFVPTRIFRGHARSDKKSRR.

This sequence belongs to the universal ribosomal protein uS19 family.

It is found in the plastid. The protein resides in the chloroplast. Its function is as follows. Protein S19 forms a complex with S13 that binds strongly to the 16S ribosomal RNA. The chain is Small ribosomal subunit protein uS19c from Angiopteris evecta (Mule's foot fern).